A 140-amino-acid chain; its full sequence is Gastrula zinc finger protein XlCGF49.1 (140 aa).

5 C2H2-type zinc fingers span residues 6-28 (FTCM…YKIH), 34-56 (FTCM…YKMH), 62-84 (FSCS…QKIH), 90-112 (YACT…WKIH), and 118-140 (FSCT…QKMH).

This sequence belongs to the krueppel C2H2-type zinc-finger protein family.

Its subcellular location is the nucleus. In terms of biological role, may be involved in transcriptional regulation. The chain is Gastrula zinc finger protein XlCGF49.1 from Xenopus laevis (African clawed frog).